Here is a 1363-residue protein sequence, read N- to C-terminus: DNA-directed RNA polymerase subunit beta (1363 aa).

This sequence belongs to the RNA polymerase beta chain family. The RNAP catalytic core consists of 2 alpha, 1 beta, 1 beta' and 1 omega subunit. When a sigma factor is associated with the core the holoenzyme is formed, which can initiate transcription.

The enzyme catalyses RNA(n) + a ribonucleoside 5'-triphosphate = RNA(n+1) + diphosphate. DNA-dependent RNA polymerase catalyzes the transcription of DNA into RNA using the four ribonucleoside triphosphates as substrates. The polypeptide is DNA-directed RNA polymerase subunit beta (Syntrophus aciditrophicus (strain SB)).